The sequence spans 308 residues: Glutaminase 1 (308 aa).

7 residues coordinate substrate: Ser-64, Asn-116, Glu-161, Asn-168, Tyr-192, Tyr-244, and Val-262.

It belongs to the glutaminase family. Homotetramer.

It carries out the reaction L-glutamine + H2O = L-glutamate + NH4(+). The protein is Glutaminase 1 of Halalkalibacterium halodurans (strain ATCC BAA-125 / DSM 18197 / FERM 7344 / JCM 9153 / C-125) (Bacillus halodurans).